A 199-amino-acid chain; its full sequence is Protein-methionine-sulfoxide reductase heme-binding subunit MsrQ (199 aa).

Helical transmembrane passes span 10 to 30 (WLKV…ILSV), 79 to 99 (LLGL…SVLE), 118 to 138 (LTLG…STLW), 147 to 167 (WQKL…HYLW), and 169 to 189 (VKTL…LLAL).

Belongs to the MsrQ family. In terms of assembly, heterodimer of a catalytic subunit (MsrP) and a heme-binding subunit (MsrQ). FMN is required as a cofactor. Requires heme b as cofactor.

Its subcellular location is the cell inner membrane. Its function is as follows. Part of the MsrPQ system that repairs oxidized periplasmic proteins containing methionine sulfoxide residues (Met-O), using respiratory chain electrons. Thus protects these proteins from oxidative-stress damage caused by reactive species of oxygen and chlorine generated by the host defense mechanisms. MsrPQ is essential for the maintenance of envelope integrity under bleach stress, rescuing a wide series of structurally unrelated periplasmic proteins from methionine oxidation. MsrQ provides electrons for reduction to the reductase catalytic subunit MsrP, using the quinone pool of the respiratory chain. This is Protein-methionine-sulfoxide reductase heme-binding subunit MsrQ from Yersinia enterocolitica serotype O:8 / biotype 1B (strain NCTC 13174 / 8081).